Reading from the N-terminus, the 328-residue chain is Delta(3,5)-Delta(2,4)-dienoyl-CoA isomerase, mitochondrial (328 aa).

Residues 1 to 26 (MAAGIVASRRLRDLLTRRLTASNYPG) constitute a mitochondrion transit peptide. Residues 116–120 (AGVDL) and glycine 174 contribute to the substrate site. The residue at position 231 (lysine 231) is an N6-succinyllysine. Serine 268 is modified (phosphoserine). The Microbody targeting signal motif lies at 326 to 328 (SKL). Position 327 is an N6-acetyllysine (lysine 327).

It belongs to the enoyl-CoA hydratase/isomerase family. In terms of assembly, homohexamer.

It is found in the mitochondrion. The protein localises to the peroxisome. It catalyses the reaction (3E,5Z)-octadienoyl-CoA = (2E,4E)-octadienoyl-CoA. The enzyme catalyses (3E,5Z,8Z,11Z,14Z)-eicosapentaenoyl-CoA = (2E,4E,8Z,11Z,14Z)-eicosapentaenoyl-CoA. It functions in the pathway lipid metabolism; fatty acid beta-oxidation. Functionally, isomerization of 3-trans,5-cis-dienoyl-CoA to 2-trans,4-trans-dienoyl-CoA. In Pongo abelii (Sumatran orangutan), this protein is Delta(3,5)-Delta(2,4)-dienoyl-CoA isomerase, mitochondrial (ECH1).